We begin with the raw amino-acid sequence, 766 residues long: MEESEQVLPLLTNPKDLTNPSYASSSSSSSEPRDETEDLLLPISDENEEEEEENSPIRQVALTVPTTDDPSLPVLTFRMWVLGTLSCILLSFLNQFFWYRTEPLTISAISAQIAVVPLGRLMAAKITDRVFFQGSKWQFTLNPGPFNVKEHVLITIFANAGAGSVYAIHVVTVVKAFYMKNITFFVSFIVIVTTQVLGFGWAGIFRKYLVEPAAMWWPANLVQVSLFRALHEKEERTKGGLTRTQFFVIAFVCSFAYYVFPGYLFQIMTSLSWVCWFFPSSVMAQQIGSGLHGLGVGAIGLDWSTISSYLGSPLASPWFATANVGVGFVLVIYVLVPICYWLDVYKAKTFPIFSSSLFSSQGSKYNITSIIDSNFHLDLPAYERQGPLYLCTFFAISYGVGFAALSATIMHVALFHGREIWEQSKESFKEKKLDVHARLMQRYKQVPEWWFWCILVTNVGATIFACEYYNDQLQLPWWGVLLACTVAIIFTLPIGIITAITNQAPGLNIITEYIIGYIYPGYPVANMCFKVYGYISMQQAITFLQDFKLGHYMKIPPRTMFMAQIVGTLISCFVYLTTAWWLMETIPNICDSVTNSVWTCPSDKVFYDASVIWGLIGPRRIFGDLGLYKSVNWFFLVGAIAPILVWLASRMFPRQEWIKLINMPVLISATSSMPPATAVNYTTWVLAGFLSGFVVFRYRPNLWQRYNYVLSGALDAGLAFMGVLLYMCLGLENVSLDWWGNELDGCPLASCPTAPGIIVEGCPLYT.

The disordered stretch occupies residues 1-58; sequence MEESEQVLPLLTNPKDLTNPSYASSSSSSSEPRDETEDLLLPISDENEEEEEENSPIR. Positions 45-54 are enriched in acidic residues; the sequence is DENEEEEEEN. 15 helical membrane passes run 79-99, 104-124, 154-174, 184-204, 247-267, 287-307, 324-344, 390-410, 446-466, 477-497, 509-529, 561-581, 627-647, 676-696, and 709-729; these read MWVLGTLSCILLSFLNQFFWY, LTISAISAQIAVVPLGRLMAA, ITIFANAGAGSVYAIHVVTVV, FFVSFIVIVTTQVLGFGWAGI, FVIAFVCSFAYYVFPGYLFQI, IGSGLHGLGVGAIGLDWSTIS, VGVGFVLVIYVLVPICYWLDV, LCTFFAISYGVGFAALSATIM, VPEWWFWCILVTNVGATIFAC, WWGVLLACTVAIIFTLPIGII, IITEYIIGYIYPGYPVANMCF, FMAQIVGTLISCFVYLTTAWW, LYKSVNWFFLVGAIAPILVWL, ATAVNYTTWVLAGFLSGFVVF, and VLSGALDAGLAFMGVLLYMCL.

It belongs to the oligopeptide OPT transporter (TC 2.A.67.1) family. As to expression, expressed in the major and the first-order veins and in the hydathodes of the leaves. In the roots, expressed in circular zones surrounding lateral root primordia and in some part of the root epidermis. Expressed also in the sepals and the cortical tissues of the stem, but not in the conducting bundles, the petals or the reproductive tissues.

The protein localises to the membrane. In terms of biological role, involved in the translocation of tetra- and pentapeptides across the cellular membrane in an energy-dependent manner. May also transport cadmium complexes. The polypeptide is Oligopeptide transporter 7 (OPT7) (Arabidopsis thaliana (Mouse-ear cress)).